We begin with the raw amino-acid sequence, 432 residues long: D-amino acid dehydrogenase (432 aa).

3–17 (VVILGSGVVGVASAW) provides a ligand contact to FAD.

The protein belongs to the DadA oxidoreductase family. FAD serves as cofactor.

It carries out the reaction a D-alpha-amino acid + A + H2O = a 2-oxocarboxylate + AH2 + NH4(+). The protein operates within amino-acid degradation; D-alanine degradation; NH(3) and pyruvate from D-alanine: step 1/1. Oxidative deamination of D-amino acids. The protein is D-amino acid dehydrogenase of Klebsiella pneumoniae (strain 342).